The sequence spans 393 residues: Formate-dependent phosphoribosylglycinamide formyltransferase (393 aa).

N(1)-(5-phospho-beta-D-ribosyl)glycinamide contacts are provided by residues 22–23 (EL) and E82. Residues R114, K155, 160 to 165 (SSGKGQ), 195 to 198 (EGFI), and E203 contribute to the ATP site. Residues 119-308 (RLAAEELGLP…EFALHARAIL (190 aa)) enclose the ATP-grasp domain. 2 residues coordinate Mg(2+): E267 and E279. N(1)-(5-phospho-beta-D-ribosyl)glycinamide contacts are provided by residues D286, K356, and 363 to 364 (RR).

It belongs to the PurK/PurT family. In terms of assembly, homodimer.

The catalysed reaction is N(1)-(5-phospho-beta-D-ribosyl)glycinamide + formate + ATP = N(2)-formyl-N(1)-(5-phospho-beta-D-ribosyl)glycinamide + ADP + phosphate + H(+). It functions in the pathway purine metabolism; IMP biosynthesis via de novo pathway; N(2)-formyl-N(1)-(5-phospho-D-ribosyl)glycinamide from N(1)-(5-phospho-D-ribosyl)glycinamide (formate route): step 1/1. Functionally, involved in the de novo purine biosynthesis. Catalyzes the transfer of formate to 5-phospho-ribosyl-glycinamide (GAR), producing 5-phospho-ribosyl-N-formylglycinamide (FGAR). Formate is provided by PurU via hydrolysis of 10-formyl-tetrahydrofolate. This chain is Formate-dependent phosphoribosylglycinamide formyltransferase, found in Stutzerimonas stutzeri (strain A1501) (Pseudomonas stutzeri).